Reading from the N-terminus, the 290-residue chain is 4-hydroxybenzoate octaprenyltransferase (290 aa).

6 helical membrane-spanning segments follow: residues 41-61 (WPLL…GCAM), 89-109 (WEAV…IQPL), 133-153 (FFAI…PMAF), 158-178 (DTVP…SVAY), 202-224 (FGRF…YVWI), and 269-289 (WLGG…GTAG).

The protein belongs to the UbiA prenyltransferase family. It depends on Mg(2+) as a cofactor.

The protein resides in the cell inner membrane. It carries out the reaction all-trans-octaprenyl diphosphate + 4-hydroxybenzoate = 4-hydroxy-3-(all-trans-octaprenyl)benzoate + diphosphate. It functions in the pathway cofactor biosynthesis; ubiquinone biosynthesis. Functionally, catalyzes the prenylation of para-hydroxybenzoate (PHB) with an all-trans polyprenyl group. Mediates the second step in the final reaction sequence of ubiquinone-8 (UQ-8) biosynthesis, which is the condensation of the polyisoprenoid side chain with PHB, generating the first membrane-bound Q intermediate 3-octaprenyl-4-hydroxybenzoate. This chain is 4-hydroxybenzoate octaprenyltransferase, found in Burkholderia ambifaria (strain MC40-6).